A 173-amino-acid polypeptide reads, in one-letter code: NADH-ubiquinone oxidoreductase chain 6 (173 aa).

5 helical membrane passes run 1–21, 27–47, 48–68, 87–107, and 139–159; these read MTYF…AVAS, YGVV…LSLG, VSFV…VVFV, VVGY…VGGF, and CGVG…FVVL.

It belongs to the complex I subunit 6 family.

Its subcellular location is the mitochondrion membrane. The catalysed reaction is a ubiquinone + NADH + 5 H(+)(in) = a ubiquinol + NAD(+) + 4 H(+)(out). Functionally, core subunit of the mitochondrial membrane respiratory chain NADH dehydrogenase (Complex I) that is believed to belong to the minimal assembly required for catalysis. Complex I functions in the transfer of electrons from NADH to the respiratory chain. The immediate electron acceptor for the enzyme is believed to be ubiquinone. This Aethia pygmaea (Whiskered auklet) protein is NADH-ubiquinone oxidoreductase chain 6 (MT-ND6).